We begin with the raw amino-acid sequence, 410 residues long: Transcription factor rglT (410 aa).

A disordered region spans residues 1–24 (MQFDSLPLPPSSSHDTTSVPPLKR). A DNA-binding region (zn(2)-C6 fungal-type) is located at residues 28-55 (CDECRKRKLKCSGEATGCSRCLKQSLPC). The interval 353 to 372 (HRTRTVESPNEPGSCSPVSH) is disordered. The span at 358–369 (VESPNEPGSCSP) shows a compositional bias: polar residues.

Its subcellular location is the nucleus. Transcription factor that is involved in protection against oxidative stress. Binds to promoter regions of the gliotoxin (GT) biosynthetic genes gliZ, gliF, gliT, gliM, gliA and gtmA. Two related but different DNA motifs (5'-TCGG-3' and 5'-CGGNCGG-3') are specifically enriched among rglT binding sites in GT-inducing conditions. Also indirectly regulates the expression of gliP, gliG, gliH and gliN. Plays a key role in resistance against exogenously-added GT and GT biosynthesis, mainly through the direct regulation of gliT. Furthermore, rglT is important for virulence in chemotherapeutic mice with invasive pulmonary aspergillosis (IPA). In Aspergillus fumigatus (strain CBS 144.89 / FGSC A1163 / CEA10) (Neosartorya fumigata), this protein is Transcription factor rglT.